Consider the following 376-residue polypeptide: Salivary hyaluronidase (376 aa).

The signal sequence occupies residues 1–16 (MNWIFHLFCAVYGIFC). 2 cysteine pairs are disulfide-bonded: cysteine 32/cysteine 328 and cysteine 203/cysteine 217. Residues asparagine 36, asparagine 55, asparagine 77, and asparagine 88 are each glycosylated (N-linked (GlcNAc...) asparagine). Glutamate 118 functions as the Proton donor in the catalytic mechanism. Residues asparagine 143, asparagine 153, asparagine 181, asparagine 214, asparagine 226, asparagine 248, asparagine 287, asparagine 321, asparagine 336, asparagine 356, and asparagine 371 are each glycosylated (N-linked (GlcNAc...) asparagine).

This sequence belongs to the glycosyl hydrolase 56 family. Post-translationally, glycosylated; glycosylation is critical for enzymatic activity. Female salivary gland (at protein level).

Its subcellular location is the secreted. The enzyme catalyses Random hydrolysis of (1-&gt;4)-linkages between N-acetyl-beta-D-glucosamine and D-glucuronate residues in hyaluronate.. Hydrolyzes high molecular weight hyaluronic acid to produce small oligosaccharides. Up-regulates expression of CSF2, CSF3, LIF, CXCL1, CXCL2 and CXCL8 in cultured human dermal microvascular endothelial cells. Promotes host neutrophil recruitment at the injection site. In terms of biological role, (Microbial infection) Probably promotes Leishmania major infection in the host. The polypeptide is Salivary hyaluronidase (Lutzomyia longipalpis (Sand fly)).